The chain runs to 462 residues: Transcription initiation factor TFIID subunit 7-like (462 aa).

Disordered stretches follow at residues Met-1–Glu-97 and Asp-327–Tyr-366. Low complexity-rich tracts occupy residues Ser-16–Glu-30 and Asp-66–Ala-77. The span at Asp-333–Glu-365 shows a compositional bias: acidic residues. Residues Asp-342 to Lys-462 are a coiled coil.

The protein belongs to the TAF7 family. As to quaternary structure, TFIID is composed of TATA binding protein (TBP) and a number of TBP-associated factors (TAFs). TAF7L may replace TAF7 in a spermatogenesis-specific form of TFIID. Interacts with TBP; the interaction occurs in a sub-population of cells (pachytene and haploid round spermatids) and is developmentally regulated through differential intracellular localization of the two proteins. Interacts with TAF1. As to expression, testis-specific.

It localises to the nucleus. The protein localises to the cytoplasm. Probably functions as a spermatogenesis-specific component of the DNA-binding general transcription factor complex TFIID, a multimeric protein complex that plays a central role in mediating promoter responses to various activators and repressors. May play a role in spermatogenesis. In Homo sapiens (Human), this protein is Transcription initiation factor TFIID subunit 7-like (TAF7L).